The primary structure comprises 227 residues: Protein p26 (227 aa).

In terms of assembly, self-associates.

The protein resides in the host cell junction. It is found in the host plasmodesma. The protein is Protein p26 of Lettuce infectious yellows virus (isolate United States/92) (LIYV).